A 315-amino-acid polypeptide reads, in one-letter code: 7,8-didemethyl-8-hydroxy-5-deazariboflavin synthase (315 aa).

One can recognise a Radical SAM core domain in the interval 6 to 237 (ITYSPAFTLV…EDITIQIPAN (232 aa)). [4Fe-4S] cluster is bound by residues Cys-20, Cys-24, and Cys-27.

This sequence belongs to the radical SAM superfamily. CofG family. In terms of assembly, consists of two subunits, CofG and CofH. Requires [4Fe-4S] cluster as cofactor.

It catalyses the reaction 5-amino-5-(4-hydroxybenzyl)-6-(D-ribitylimino)-5,6-dihydrouracil + S-adenosyl-L-methionine = 7,8-didemethyl-8-hydroxy-5-deazariboflavin + 5'-deoxyadenosine + L-methionine + NH4(+) + H(+). Its pathway is cofactor biosynthesis; coenzyme F0 biosynthesis. Functionally, catalyzes the radical-mediated synthesis of 7,8-didemethyl-8-hydroxy-5-deazariboflavin from 5-amino-5-(4-hydroxybenzyl)-6-(D-ribitylimino)-5,6-dihydrouracil. The chain is 7,8-didemethyl-8-hydroxy-5-deazariboflavin synthase from Thermosynechococcus vestitus (strain NIES-2133 / IAM M-273 / BP-1).